Here is a 167-residue protein sequence, read N- to C-terminus: CGG triplet repeat-binding protein 1 (167 aa).

At S56 the chain carries Phosphoserine. A Nuclear localization signal motif is present at residues 80–84 (RKKQR). Residue S164 is modified to Phosphoserine.

In terms of tissue distribution, ubiquitous. Highly expressed in placenta, thymus, lymph nodes, cerebellum and cerebral cortex. Low expression in other regions of the brain.

The protein localises to the nucleus. Binds to nonmethylated 5'-d(CGG)(n)-3' trinucleotide repeats in the FMR1 promoter. May play a role in regulating FMR1 promoter. This chain is CGG triplet repeat-binding protein 1 (CGGBP1), found in Homo sapiens (Human).